A 222-amino-acid chain; its full sequence is Large ribosomal subunit protein uL4 (222 aa).

The protein belongs to the universal ribosomal protein uL4 family. As to quaternary structure, part of the 50S ribosomal subunit.

Its function is as follows. One of the primary rRNA binding proteins, this protein initially binds near the 5'-end of the 23S rRNA. It is important during the early stages of 50S assembly. It makes multiple contacts with different domains of the 23S rRNA in the assembled 50S subunit and ribosome. In terms of biological role, forms part of the polypeptide exit tunnel. This is Large ribosomal subunit protein uL4 from Methylacidiphilum infernorum (isolate V4) (Methylokorus infernorum (strain V4)).